The primary structure comprises 212 residues: Adenylate kinase (212 aa).

ATP is bound at residue 10–15 (GAGKGT). An NMP region spans residues 30 to 59 (AIGDIFRAIIKTSSKDAEVINSYVEQGKLI). AMP-binding positions include Arg-36, 57 to 59 (KLI), 85 to 88 (GYPR), and Gln-92. The segment at 122–160 (GRYSCKSCGKIYNDYFLKPRIDKICDVCKSSVFEYRKDD) is LID. Arg-123 lines the ATP pocket. Zn(2+) is bound by residues Cys-126 and Cys-129. 132-133 (IY) is a binding site for ATP. Zn(2+) contacts are provided by Cys-146 and Cys-149. AMP contacts are provided by Arg-157 and Arg-168. Position 196 (Lys-196) interacts with ATP.

It belongs to the adenylate kinase family. In terms of assembly, monomer.

It is found in the cytoplasm. It carries out the reaction AMP + ATP = 2 ADP. It functions in the pathway purine metabolism; AMP biosynthesis via salvage pathway; AMP from ADP: step 1/1. In terms of biological role, catalyzes the reversible transfer of the terminal phosphate group between ATP and AMP. Plays an important role in cellular energy homeostasis and in adenine nucleotide metabolism. The chain is Adenylate kinase from Rickettsia bellii (strain RML369-C).